A 297-amino-acid chain; its full sequence is ATP synthase gamma chain (297 aa).

This sequence belongs to the ATPase gamma chain family. As to quaternary structure, F-type ATPases have 2 components, CF(1) - the catalytic core - and CF(0) - the membrane proton channel. CF(1) has five subunits: alpha(3), beta(3), gamma(1), delta(1), epsilon(1). CF(0) has three main subunits: a, b and c.

The protein resides in the cell membrane. Functionally, produces ATP from ADP in the presence of a proton gradient across the membrane. The gamma chain is believed to be important in regulating ATPase activity and the flow of protons through the CF(0) complex. This Beutenbergia cavernae (strain ATCC BAA-8 / DSM 12333 / CCUG 43141 / JCM 11478 / NBRC 16432 / NCIMB 13614 / HKI 0122) protein is ATP synthase gamma chain.